Reading from the N-terminus, the 213-residue chain is T-cell surface glycoprotein CD8 beta chain (213 aa).

Residues 1-21 form the signal peptide; the sequence is MQPWLWLVFSMKLAALWSSSA. The region spanning 22–133 is the Ig-like V-type domain; sequence LIQTPSSLLV…KMVFGTGTKL (112 aa). Over 22–175 the chain is Extracellular; the sequence is LIQTPSSLLV…QKGLTCSLTT (154 aa). An N-linked (GlcNAc...) asparagine glycan is attached at Asn34. Cys41 and Cys117 are disulfide-bonded. Residues 176-196 form a helical membrane-spanning segment; it reads LSLLVVCILLLLAFLGVAVYF. At 197–213 the chain is on the cytoplasmic side; the sequence is YCVRRRARIHFMKQFHK.

In terms of assembly, forms disulfide-linked heterodimers with CD8A at the cell surface. Interacts with CD3D; this interaction couples TCR-CD3 with CD8. Interacts with LCK. Post-translationally, palmitoylated at the cytoplasmic tail and thereby targets the heterodimer CD8A/CD8B to lipid rafts unlike CD8A homodimers.

The protein localises to the membrane. Functionally, integral membrane glycoprotein that plays an essential role in the immune response and serves multiple functions in responses against both external and internal offenses. In T-cells, functions primarily as a coreceptor for MHC class I molecule:peptide complex. The antigens presented by class I peptides are derived from cytosolic proteins while class II derived from extracellular proteins. Interacts simultaneously with the T-cell receptor (TCR) and the MHC class I proteins presented by antigen presenting cells (APCs). In turn, recruits the Src kinase LCK to the vicinity of the TCR-CD3 complex. A palmitoylation site in the cytoplasmic tail of CD8B chain contributes to partitioning of CD8 into the plasma membrane lipid rafts where signaling proteins are enriched. Once LCK recruited, it initiates different intracellular signaling pathways by phosphorylating various substrates ultimately leading to lymphokine production, motility, adhesion and activation of cytotoxic T-lymphocytes (CTLs). Additionally, plays a critical role in thymic selection of CD8+ T-cells. This Mus musculus (Mouse) protein is T-cell surface glycoprotein CD8 beta chain (Cd8b).